The sequence spans 222 residues: Ribose-5-phosphate isomerase A (222 aa).

Substrate is bound by residues 29–32 (TGST), 82–85 (DSAD), and 95–98 (KGGG). Catalysis depends on E104, which acts as the Proton acceptor. Residue K122 coordinates substrate.

It belongs to the ribose 5-phosphate isomerase family. Homodimer.

The enzyme catalyses aldehydo-D-ribose 5-phosphate = D-ribulose 5-phosphate. It participates in carbohydrate degradation; pentose phosphate pathway; D-ribose 5-phosphate from D-ribulose 5-phosphate (non-oxidative stage): step 1/1. Catalyzes the reversible conversion of ribose-5-phosphate to ribulose 5-phosphate. The protein is Ribose-5-phosphate isomerase A of Blochmanniella floridana.